The following is a 499-amino-acid chain: Replication factor C large subunit (499 aa).

50 to 57 lines the ATP pocket; the sequence is GPPGVGKT. The segment at 428–499 is disordered; the sequence is EAERRVEAAE…QATLFDFLKK (72 aa). Residues 436 to 472 show a composition bias toward acidic residues; sequence AEEEETMEAGEPEEELEEVEEEELTEEELEEAEEEIE. Residues 473-484 are compositionally biased toward basic and acidic residues; it reads TVGKKEKPEKEK.

This sequence belongs to the activator 1 small subunits family. RfcL subfamily. In terms of assembly, heteromultimer composed of small subunits (RfcS) and large subunits (RfcL).

Functionally, part of the RFC clamp loader complex which loads the PCNA sliding clamp onto DNA. The protein is Replication factor C large subunit of Thermococcus kodakarensis (strain ATCC BAA-918 / JCM 12380 / KOD1) (Pyrococcus kodakaraensis (strain KOD1)).